The sequence spans 219 residues: 3-demethoxyubiquinol 3-hydroxylase (219 aa).

A disordered region spans residues 21–51 (RTLTPGTTQAERTPAHAAPAPDAPEAGTLPS). Residues 35 to 46 (AHAAPAPDAPEA) are compositionally biased toward low complexity. Residues glutamate 68, glutamate 98, histidine 101, glutamate 150, glutamate 182, and histidine 185 each contribute to the Fe cation site.

It belongs to the COQ7 family. Fe cation serves as cofactor.

The protein localises to the cell membrane. The catalysed reaction is a 5-methoxy-2-methyl-3-(all-trans-polyprenyl)benzene-1,4-diol + AH2 + O2 = a 3-demethylubiquinol + A + H2O. It functions in the pathway cofactor biosynthesis; ubiquinone biosynthesis. Its function is as follows. Catalyzes the hydroxylation of 2-nonaprenyl-3-methyl-6-methoxy-1,4-benzoquinol during ubiquinone biosynthesis. The protein is 3-demethoxyubiquinol 3-hydroxylase of Alcanivorax borkumensis (strain ATCC 700651 / DSM 11573 / NCIMB 13689 / SK2).